We begin with the raw amino-acid sequence, 311 residues long: Urease accessory protein UreD 3 (311 aa).

Belongs to the UreD family. As to quaternary structure, ureD, UreF and UreG form a complex that acts as a GTP-hydrolysis-dependent molecular chaperone, activating the urease apoprotein by helping to assemble the nickel containing metallocenter of UreC. The UreE protein probably delivers the nickel.

It is found in the cytoplasm. Its function is as follows. Required for maturation of urease via the functional incorporation of the urease nickel metallocenter. The protein is Urease accessory protein UreD 3 of Methylorubrum populi (strain ATCC BAA-705 / NCIMB 13946 / BJ001) (Methylobacterium populi).